A 182-amino-acid chain; its full sequence is Hexose transport activator protein (182 aa).

The segment at 46–65 (GIWGPMEKKPGGVGKKKGSE) is disordered.

Its function is as follows. Multicopy expression suppresses glucose-uptake defects in various yeast mutants. The protein is Hexose transport activator protein (AHT1) of Saccharomyces cerevisiae (strain ATCC 204508 / S288c) (Baker's yeast).